The chain runs to 440 residues: FAD-dependent monooxygenase FVEG_08293 (440 aa).

A helical transmembrane segment spans residues 7-26 (EFNVAIVGAGVAGLALAMAL). Glu-37 and Gly-50 together coordinate FAD. N-linked (GlcNAc...) asparagine glycosylation occurs at Asn-77. An FAD-binding site is contributed by Arg-122. Active-site residues include Arg-203 and Tyr-235. Residues Asp-317 and Ala-330 each contribute to the FAD site.

It belongs to the paxM FAD-dependent monooxygenase family. Requires FAD as cofactor.

The protein localises to the membrane. Its function is as follows. FAD-dependent monooxygenase; part of the Fusarium detoxification of benzoxazolinone cluster 1 (FDB1) involved in the degradation of benzoxazolinones produced by the host plant. Maize, wheat, and rye produce the 2 benzoxazinone phytoanticipins 2,4-dihy-droxy-7-methoxy-1,4-benzoxazin-3-one (DIMBOA) and 2,4-dihydroxy-1,4-benzoxazin-3-one (DIBOA) that, due to their inherent instability once released, spontaneously degrade to the more stable corresponding benzoxazolinones, 6-methoxy-2-benzoxazolinone (MBOA) and 2-benzoxazolinone (BOA), respectively. The first step in the detoxification of benzoxazolinones involves the hydrolysis of the cyclic ester bond of benzoxazolinones by the FDB1 cluster gamma-lactamase MBL1 to aminophenols. MBL1 is able to convert BOA into 2-aminophenol (2-AP), as well as MBOA into 5-methoxy-2-aminophenol (2-AMP). The FDB2 cluster N-malonyltransferase FDB2/NAT1 then metabolizes aminophenols via N-malonylation to non-toxic malonamic acids. FDB2/NAT1 converts 2-AP into N-(2-hydroxyphenyl) malonamic acid (HPMA) and 2-AMP into N-(2-hydroxy-4-methoxyphenyl) malonamic acid (HMPMA). The duplicated dienlactone hydrolases DLH1 and DLH2 may provide redundant function for hydrolyzing the lactone moiety in the BOA molecule. The roles of the amidases an other enzymes encoded by the 2 FDB clusters have not been identified so far. In Gibberella moniliformis (strain M3125 / FGSC 7600) (Maize ear and stalk rot fungus), this protein is FAD-dependent monooxygenase FVEG_08293.